The following is a 644-amino-acid chain: Exoribonuclease 2 (644 aa).

Positions 189–516 constitute an RNB domain; sequence RQDLTALNFV…NHRLLKAVIK (328 aa). Positions 561-643 constitute an S1 motif domain; the sequence is NTRFAAEIID…ETRSIIARPA (83 aa).

The protein belongs to the RNR ribonuclease family. RNase II subfamily.

Its subcellular location is the cytoplasm. The enzyme catalyses Exonucleolytic cleavage in the 3'- to 5'-direction to yield nucleoside 5'-phosphates.. Its function is as follows. Involved in mRNA degradation. Hydrolyzes single-stranded polyribonucleotides processively in the 3' to 5' direction. The polypeptide is Exoribonuclease 2 (Salmonella dublin (strain CT_02021853)).